Here is a 399-residue protein sequence, read N- to C-terminus: Large envelope protein (399 aa).

Met1 bears the N-acetylmethionine mark. A lipid anchor (N-myristoyl glycine; by host) is attached at Gly2. The segment at 2–118 (GLSWTVPLEW…PPLRDSHPQA (117 aa)) is pre-S1. Residues 2-173 (GLSWTVPLEW…FSRIGDPAPN (172 aa)) are pre-S. Over 2 to 180 (GLSWTVPLEW…APNMENITSG (179 aa)) the chain is Virion surface; in external conformation. The Intravirion; in internal conformation portion of the chain corresponds to 2-252 (GLSWTVPLEW…PGYRWMCLRR (251 aa)). An N-linked (GlcNAc...) asparagine glycan is attached at Ser4. The segment at 69-117 (PHGGLLGWSPQSQGTLTTLPADPPPASTNRQSGRQPTPISPPLRDSHPQ) is disordered. The tract at residues 119–173 (MQWNSTAFHQALQNPKVRGLYFPAGGSSSGIVNPVPTIASHISSIFSRIGDPAPN) is pre-S2. The helical transmembrane segment at 181–201 (FLGPLLVLQAGFFLLTRILTI) threads the bilayer. The Intravirion; in external conformation segment spans residues 202-252 (PQSLDSWWTSLNFLGGVPVCPGLNSQSPTSNHSPISCPPTCPGYRWMCLRR). A helical membrane pass occupies residues 253-273 (FIIFLFILLLCLIFLLVLLDY). The Virion surface segment spans residues 274-347 (QGMLPVCPLI…WASVRFSWLS (74 aa)). A glycan (N-linked (GlcNAc...) asparagine; by host) is linked at Asn319. Residues 348 to 368 (LLVPFVQWFVGLSPTVWLSAI) form a helical membrane-spanning segment. The Intravirion segment spans residues 369–374 (WMMWYW). Residues 375–397 (GPNLYNILSPFIPLLPIFFCLWV) traverse the membrane as a helical segment. Residues 398 to 399 (YI) lie on the Virion surface side of the membrane.

The protein belongs to the orthohepadnavirus major surface antigen family. In terms of assembly, in its internal form (Li-HBsAg), interacts with the capsid protein and with the isoform S. Interacts with host chaperone CANX. Associates with host chaperone CANX through its pre-S2 N glycan; this association may be essential for isoform M proper secretion. As to quaternary structure, interacts with isoform L. Interacts with the antigens of satellite virus HDV (HDVAgs); this interaction is required for encapsidation of HDV genomic RNA. In terms of processing, isoform M is N-terminally acetylated by host at a ratio of 90%, and N-glycosylated by host at the pre-S2 region. Myristoylated.

Its subcellular location is the virion membrane. Functionally, the large envelope protein exists in two topological conformations, one which is termed 'external' or Le-HBsAg and the other 'internal' or Li-HBsAg. In its external conformation the protein attaches the virus to cell receptors and thereby initiating infection. This interaction determines the species specificity and liver tropism. This attachment induces virion internalization predominantly through caveolin-mediated endocytosis. The large envelope protein also assures fusion between virion membrane and endosomal membrane. In its internal conformation the protein plays a role in virion morphogenesis and mediates the contact with the nucleocapsid like a matrix protein. Its function is as follows. The middle envelope protein plays an important role in the budding of the virion. It is involved in the induction of budding in a nucleocapsid independent way. In this process the majority of envelope proteins bud to form subviral lipoprotein particles of 22 nm of diameter that do not contain a nucleocapsid. This chain is Large envelope protein, found in Hepatitis B virus genotype G (isolate IG29227/2000) (HBV-G).